We begin with the raw amino-acid sequence, 368 residues long: MSATSATNFAVQTHPVKAPDEEYFFEGAEKLLELWFCSSTQNETRSLRIIPREEIDAMLDIARCKILHSKHNESIDSYVLSESSLFISDNRVILKTCGTTRLLAALPVIMQLAGAYAGLDQVQSVYYSRKNFLRPDLQPSLHKNFDAEVEYLDSFFVDGHAYCLGSLKQDRWYLYTFHREVEFPAHKQPDHTLEILMSDLDEEVLHKFTKDYAVDGNDCFMRAGIDKIIPAGADVHDELFDPCGYSMNAYMNDTDQYATIHVTPEKAFSFASFETNQDLVCLYSQTRKVLQCFRPNKILMTVFANDISEKGKDAQQQLWDRELPGYRRTNVQFVRLETETLVYAHFVRKASTGQDSSSSDEDDGERSD.

Residues glutamate 26 and glutamate 29 contribute to the active site. Serine 83 acts as the Schiff-base intermediate with substrate; via pyruvic acid in catalysis. Residue serine 83 is modified to Pyruvic acid (Ser); by autocatalysis. Catalysis depends on cysteine 97, which acts as the Proton donor; for catalytic activity. Residues serine 246 and histidine 261 each act as proton acceptor; for processing activity in the active site.

It belongs to the eukaryotic AdoMetDC family. As to quaternary structure, heterotetramer of two alpha and two beta chains. Pyruvate serves as cofactor. Is synthesized initially as an inactive proenzyme. Formation of the active enzyme involves a self-maturation process in which the active site pyruvoyl group is generated from an internal serine residue via an autocatalytic post-translational modification. Two non-identical subunits are generated from the proenzyme in this reaction, and the pyruvate is formed at the N-terminus of the alpha chain, which is derived from the carboxyl end of the proenzyme. The post-translation cleavage follows an unusual pathway, termed non-hydrolytic serinolysis, in which the side chain hydroxyl group of the serine supplies its oxygen atom to form the C-terminus of the beta chain, while the remainder of the serine residue undergoes an oxidative deamination to produce ammonia and the pyruvoyl group blocking the N-terminus of the alpha chain.

The catalysed reaction is S-adenosyl-L-methionine + H(+) = S-adenosyl 3-(methylsulfanyl)propylamine + CO2. Its pathway is amine and polyamine biosynthesis; S-adenosylmethioninamine biosynthesis; S-adenosylmethioninamine from S-adenosyl-L-methionine: step 1/1. In terms of biological role, essential for biosynthesis of the polyamines spermidine and spermine. Polyamines are essential for cell proliferation and are implicated in cellular processes, ranging from DNA replication to apoptosis. This Caenorhabditis elegans protein is S-adenosylmethionine decarboxylase proenzyme.